The sequence spans 884 residues: DNA mismatch repair protein MutS (884 aa).

G601 to S608 contributes to the ATP binding site. The segment at E826–L845 is disordered.

The protein belongs to the DNA mismatch repair MutS family.

Functionally, this protein is involved in the repair of mismatches in DNA. It is possible that it carries out the mismatch recognition step. This protein has a weak ATPase activity. The protein is DNA mismatch repair protein MutS of Bacillus cereus (strain ATCC 14579 / DSM 31 / CCUG 7414 / JCM 2152 / NBRC 15305 / NCIMB 9373 / NCTC 2599 / NRRL B-3711).